Consider the following 38-residue polypeptide: Large ribosomal subunit protein bL36 (38 aa).

It belongs to the bacterial ribosomal protein bL36 family.

The sequence is that of Large ribosomal subunit protein bL36 from Roseiflexus sp. (strain RS-1).